Here is a 1241-residue protein sequence, read N- to C-terminus: Anion exchange protein 2 (1241 aa).

Positions 1–240 are disordered; that stretch reads MSSAPRRPAK…RSYNLQERRR (240 aa). The Cytoplasmic segment spans residues 1-707; that stretch reads MSSAPRRPAK…SDFRDALDPQ (707 aa). 2 stretches are compositionally biased toward basic and acidic residues: residues 37 to 49 and 58 to 75; these read ELHR…RFEE and GGEE…EYHR. 2 stretches are compositionally biased toward basic residues: residues 76-85 and 94-110; these read QSSHHIHHPL and RRRK…RRRP. Phosphoserine occurs at positions 113, 132, 144, 170, 172, and 173. Residues 120-133 are compositionally biased toward acidic residues; that stretch reads TIEEGEEDEDEASE. Residues 141 to 155 show a composition bias toward low complexity; it reads TQPSPVSTPSSVQFF. At T183 the chain carries Phosphothreonine. Residues 189–209 show a composition bias toward low complexity; sequence GAQAGTQVEEAEAEAVAVASG. The segment covering 210–219 has biased composition (gly residues); sequence TAGGDDGGAS. S243 is modified (phosphoserine). Position 257 is a phosphothreonine (T257). N6-methyllysine is present on K274. A disordered region spans residues 288 to 320; it reads LVRKNAKGSTQSGREGREPGPTPRARPRAPHKP. A Phosphoserine modification is found at S443. The segment at 449-471 is disordered; it reads SLLGHHHGQGAESDPHVTEPLMG. 4 helical membrane-spanning segments follow: residues 708-731, 737-774, 784-816, and 826-847; these read CLAA…GLLG, LIGV…LLVF, SNHL…SFLV, and IFAF…VKIF. Residues 708–1241 form a membrane (anion exchange) region; sequence CLAAVIFIYF…DEYNEMPMPV (534 aa). Residues 848–900 are Extracellular-facing; the sequence is QEHPLHGCSASNSSEVDGGENMTWAGARPTLGPGNRSLAGQSGQGKPRGQPNT. N-linked (GlcNAc...) asparagine glycosylation is found at N859, N868, and N882. The helical transmembrane segment at 901–918 threads the bilayer; sequence ALLSLVLMAGTFFIAFFL. Over 919–933 the chain is Cytoplasmic; that stretch reads RKFKNSRFFPGRIRR. 5 consecutive transmembrane segments (helical) span residues 934–954, 988–1010, 1036–1059, 1091–1136, and 1163–1199; these read VIGD…DYSI, PFPV…LIFM, LLLI…AATV, VTGL…IQFY, and MHLF…TVPL. C1173 is lipidated: S-palmitoyl cysteine.

It belongs to the anion exchanger (TC 2.A.31) family. Expressed in the liver, stomach, kidney, prostate, thyroid and rectum. In terms of tissue distribution, expressed in the liver and kidney.

The protein resides in the apical cell membrane. It is found in the basolateral cell membrane. It carries out the reaction hydrogencarbonate(in) + chloride(out) = hydrogencarbonate(out) + chloride(in). Sodium-independent anion exchanger which mediates the electroneutral exchange of chloride for bicarbonate ions across the cell membrane. Plays an important role in osteoclast differentiation and function. Regulates bone resorption and calpain-dependent actin cytoskeleton organization in osteoclasts via anion exchange-dependent control of pH. Essential for intracellular pH regulation in CD8(+) T-cells upon CD3 stimulation, modulating CD8(+) T-cell responses. The protein is Anion exchange protein 2 (SLC4A2) of Homo sapiens (Human).